We begin with the raw amino-acid sequence, 201 residues long: Ribosomal RNA small subunit methyltransferase G (201 aa).

Residues Gly71, Phe76, 120-121, and Arg134 contribute to the S-adenosyl-L-methionine site; that span reads LE.

It belongs to the methyltransferase superfamily. RNA methyltransferase RsmG family.

Its subcellular location is the cytoplasm. The catalysed reaction is guanosine(527) in 16S rRNA + S-adenosyl-L-methionine = N(7)-methylguanosine(527) in 16S rRNA + S-adenosyl-L-homocysteine. Functionally, specifically methylates the N7 position of guanine in position 527 of 16S rRNA. The sequence is that of Ribosomal RNA small subunit methyltransferase G from Rhodospirillum rubrum (strain ATCC 11170 / ATH 1.1.1 / DSM 467 / LMG 4362 / NCIMB 8255 / S1).